The sequence spans 165 residues: SsrA-binding protein (165 aa).

A disordered region spans residues 141-165; it reads KLHDKRENEKRKQSEREVKSALARY. A compositionally biased stretch (basic and acidic residues) spans 144 to 159; that stretch reads DKRENEKRKQSEREVK.

This sequence belongs to the SmpB family.

The protein resides in the cytoplasm. Functionally, required for rescue of stalled ribosomes mediated by trans-translation. Binds to transfer-messenger RNA (tmRNA), required for stable association of tmRNA with ribosomes. tmRNA and SmpB together mimic tRNA shape, replacing the anticodon stem-loop with SmpB. tmRNA is encoded by the ssrA gene; the 2 termini fold to resemble tRNA(Ala) and it encodes a 'tag peptide', a short internal open reading frame. During trans-translation Ala-aminoacylated tmRNA acts like a tRNA, entering the A-site of stalled ribosomes, displacing the stalled mRNA. The ribosome then switches to translate the ORF on the tmRNA; the nascent peptide is terminated with the 'tag peptide' encoded by the tmRNA and targeted for degradation. The ribosome is freed to recommence translation, which seems to be the essential function of trans-translation. The polypeptide is SsrA-binding protein (Prochlorococcus marinus (strain SARG / CCMP1375 / SS120)).